A 108-amino-acid polypeptide reads, in one-letter code: UPF0060 membrane protein CKO_01576 (108 aa).

The next 4 helical transmembrane spans lie at 6–26 (LLFF…WLWL), 29–49 (GATA…VWLL), 61–81 (AAYG…VDGV), and 85–105 (LYDW…VAGW).

It belongs to the UPF0060 family.

It is found in the cell inner membrane. This Citrobacter koseri (strain ATCC BAA-895 / CDC 4225-83 / SGSC4696) protein is UPF0060 membrane protein CKO_01576.